The following is a 498-amino-acid chain: ATP synthase subunit beta, chloroplastic (498 aa).

172 to 179 contacts ATP; the sequence is GGAGVGKT.

This sequence belongs to the ATPase alpha/beta chains family. F-type ATPases have 2 components, CF(1) - the catalytic core - and CF(0) - the membrane proton channel. CF(1) has five subunits: alpha(3), beta(3), gamma(1), delta(1), epsilon(1). CF(0) has four main subunits: a(1), b(1), b'(1) and c(9-12).

It is found in the plastid. It localises to the chloroplast thylakoid membrane. It catalyses the reaction ATP + H2O + 4 H(+)(in) = ADP + phosphate + 5 H(+)(out). Its function is as follows. Produces ATP from ADP in the presence of a proton gradient across the membrane. The catalytic sites are hosted primarily by the beta subunits. The polypeptide is ATP synthase subunit beta, chloroplastic (Platanus occidentalis (Sycamore)).